A 461-amino-acid polypeptide reads, in one-letter code: Phytase PHO112 (461 aa).

3 disulfide bridges follow: C62–C384, C261–C274, and C404–C412. 4 residues coordinate 1D-myo-inositol hexakisphosphate: R72, H73, R76, and S79. Catalysis depends on H73, which acts as the Nucleophile. 2 N-linked (GlcNAc...) asparagine glycosylation sites follow: N97 and N157. R169 serves as a coordination point for 1D-myo-inositol hexakisphosphate. N-linked (GlcNAc...) asparagine glycosylation is found at N229 and N248. A 1D-myo-inositol hexakisphosphate-binding site is contributed by K293. 2 N-linked (GlcNAc...) asparagine glycosylation sites follow: N302 and N313. 1D-myo-inositol hexakisphosphate is bound by residues H334 and D335. N-linked (GlcNAc...) asparagine glycosylation is found at N437 and N452.

This sequence belongs to the histidine acid phosphatase family. In terms of assembly, monomer.

It is found in the secreted. The catalysed reaction is 1D-myo-inositol hexakisphosphate + H2O = 1D-myo-inositol 1,2,4,5,6-pentakisphosphate + phosphate. It carries out the reaction 1D-myo-inositol 1,2,4,5,6-pentakisphosphate + H2O = 1D-myo-inositol 1,2,5,6-tetrakisphosphate + phosphate. The enzyme catalyses 1D-myo-inositol 1,2,5,6-tetrakisphosphate + H2O = 1D-myo-inositol 1,2,6-trisphosphate + phosphate. It catalyses the reaction 1D-myo-inositol 1,2,6-trisphosphate + H2O = 1D-myo-inositol 1,2-bisphosphate + phosphate. The catalysed reaction is 1D-myo-inositol 1,2-bisphosphate + H2O = 1D-myo-inositol 2-phosphate + phosphate. Its function is as follows. Catalyzes the phosphate monoester hydrolysis of phytic acid (myo-inositol hexakisphosphate), which results in the stepwise formation of myo-inositol pentakis-, tetrakis-, tris-, bis-, and monophosphates, as well as the liberation of inorganic phosphate. Myo-inositol 2-monophosphate is the end product. Responsible of about 25% of the phytase activity. The residual phytase activity might be contributed by other cytosolic or cellular enzymes such as acid phosphatase that also degraded the substrate phytate. Is essential for human tissue damage during infection. This Candida albicans (strain SC5314 / ATCC MYA-2876) (Yeast) protein is Phytase PHO112 (PHO112).